Here is a 149-residue protein sequence, read N- to C-terminus: Phosphoribosyl-AMP cyclohydrolase (149 aa).

Residue D92 participates in Mg(2+) binding. C93 is a Zn(2+) binding site. Positions 94 and 96 each coordinate Mg(2+). Residues C111 and C118 each coordinate Zn(2+).

It belongs to the PRA-CH family. Homodimer. Mg(2+) is required as a cofactor. The cofactor is Zn(2+).

It is found in the cytoplasm. It catalyses the reaction 1-(5-phospho-beta-D-ribosyl)-5'-AMP + H2O = 1-(5-phospho-beta-D-ribosyl)-5-[(5-phospho-beta-D-ribosylamino)methylideneamino]imidazole-4-carboxamide. Its pathway is amino-acid biosynthesis; L-histidine biosynthesis; L-histidine from 5-phospho-alpha-D-ribose 1-diphosphate: step 3/9. Catalyzes the hydrolysis of the adenine ring of phosphoribosyl-AMP. The sequence is that of Phosphoribosyl-AMP cyclohydrolase from Rhizobium rhizogenes (strain K84 / ATCC BAA-868) (Agrobacterium radiobacter).